The following is a 905-amino-acid chain: Dopamine D2-like receptor (905 aa).

The interval 1–23 (MLSPFDWRRGISSSGTGGTMAAQ) is disordered. Residues 1 to 377 (MLSPFDWRRG…GELRVVDHNY (377 aa)) are Extracellular-facing. Residues Asn88, Asn146, Asn156, Asn166, Asn174, Asn257, Asn314, and Asn343 are each glycosylated (N-linked (GlcNAc...) asparagine). The chain crosses the membrane as a helical span at residues 378 to 398 (WALILILFPILTLFGNILVIL). Residues 399 to 416 (SVCRERSLQTVTNYFIVS) lie on the Cytoplasmic side of the membrane. The helical transmembrane segment at 417–437 (LAIADLLVAVVVMPFAVYFLV) threads the bilayer. Residues 438-450 (NGAWALPDVVCDF) lie on the Extracellular side of the membrane. The cysteines at positions 448 and 525 are disulfide-linked. A helical membrane pass occupies residues 451 to 471 (YIAMDVICSTSSIFNLVAISI). Over 472–493 (DRYIAVTQPIKYAKHKNSRRVC) the chain is Cytoplasmic. A helical membrane pass occupies residues 494–514 (LTILLVWAISAAIGSPIVLGL). Over 515–531 (NNTPNREPDVCAFYNAD) the chain is Extracellular. Residues 532–552 (FILYSSLSSFYIPCIIMVFLY) form a helical membrane-spanning segment. The Cytoplasmic segment spans residues 553–830 (WNIFKALRSR…AKKERKATKT (278 aa)). Disordered stretches follow at residues 600–631 (SRHA…ISPD), 702–753 (ATSA…SVGV), and 780–799 (DSTL…KNSQ). The span at 702–722 (ATSAAPRSSGSPPDSPLPSGA) shows a compositional bias: low complexity. Residues 723–734 (TLQRSSVSSQRR) are compositionally biased toward polar residues. Positions 735–746 (PTGDDSPKRGEP) are enriched in basic and acidic residues. Residues 831-851 (LAIVLGVFLFCWLPFFSCNIM) form a helical membrane-spanning segment. The Extracellular segment spans residues 852–869 (DAMCAKFKKDCRPGLTAY). A helical transmembrane segment spans residues 870-890 (MMTTWLGYINSFVNPVIYTIF). Residues 891–905 (NPEFRKAFKKIMHMG) lie on the Cytoplasmic side of the membrane.

This sequence belongs to the G-protein coupled receptor 1 family. As to expression, highest expression is in adult heads.

Its subcellular location is the cell membrane. Functionally, receptor for dopamine. The activity of this receptor is mediated by G proteins which inhibit adenylyl cyclase. This chain is Dopamine D2-like receptor, found in Drosophila melanogaster (Fruit fly).